Here is a 747-residue protein sequence, read N- to C-terminus: DNA ligase (747 aa).

Residues 33–37 (DEEYD), 83–84 (SL), and glutamate 113 each bind NAD(+). The N6-AMP-lysine intermediate role is filled by lysine 115. NAD(+) is bound by residues arginine 136, glutamate 174, lysine 299, and lysine 323. Zn(2+) contacts are provided by cysteine 417, cysteine 420, cysteine 436, and cysteine 442. In terms of domain architecture, BRCT spans 659–747 (TGGGVLSGLT…GPGALPEVAE (89 aa)).

This sequence belongs to the NAD-dependent DNA ligase family. LigA subfamily. Mg(2+) serves as cofactor. It depends on Mn(2+) as a cofactor.

It carries out the reaction NAD(+) + (deoxyribonucleotide)n-3'-hydroxyl + 5'-phospho-(deoxyribonucleotide)m = (deoxyribonucleotide)n+m + AMP + beta-nicotinamide D-nucleotide.. Functionally, DNA ligase that catalyzes the formation of phosphodiester linkages between 5'-phosphoryl and 3'-hydroxyl groups in double-stranded DNA using NAD as a coenzyme and as the energy source for the reaction. It is essential for DNA replication and repair of damaged DNA. The sequence is that of DNA ligase from Leifsonia xyli subsp. xyli (strain CTCB07).